The chain runs to 882 residues: Alanine--tRNA ligase (882 aa).

Positions 574, 578, 682, and 686 each coordinate Zn(2+). The tract at residues 853-882 (GGRGGGKGALAQGGGLDPRKAREALPGLLP) is disordered. Gly residues predominate over residues 854 to 868 (GRGGGKGALAQGGGL).

The protein belongs to the class-II aminoacyl-tRNA synthetase family. Zn(2+) is required as a cofactor.

Its subcellular location is the cytoplasm. The catalysed reaction is tRNA(Ala) + L-alanine + ATP = L-alanyl-tRNA(Ala) + AMP + diphosphate. In terms of biological role, catalyzes the attachment of alanine to tRNA(Ala) in a two-step reaction: alanine is first activated by ATP to form Ala-AMP and then transferred to the acceptor end of tRNA(Ala). Also edits incorrectly charged Ser-tRNA(Ala) and Gly-tRNA(Ala) via its editing domain. The sequence is that of Alanine--tRNA ligase from Thermus thermophilus (strain ATCC BAA-163 / DSM 7039 / HB27).